A 156-amino-acid chain; its full sequence is H/ACA ribonucleoprotein complex subunit NHP2 (156 aa).

It belongs to the eukaryotic ribosomal protein eL8 family. Component of the small nucleolar ribonucleoprotein particles containing H/ACA-type snoRNAs (H/ACA snoRNPs). The protein component of the H/ACA snoRNP contains CBF5, GAR1, NHP2 and NOP10. The complex contains a stable core composed of CBF5 and NOP10, to which GAR1 and NHP2 subsequently bind. Interacts with SHQ1. Interacts with NAF1.

It localises to the nucleus. It is found in the nucleolus. Its function is as follows. Non-catalytic component of the H/ACA small nucleolar ribonucleoprotein (H/ACA snoRNP), which catalyzes pseudouridylation of rRNA and is required for ribosome biogenesis. This involves the isomerization of uridine such that the ribose is subsequently attached to C5, instead of the normal N1. Pseudouridine ('psi') residues may serve to stabilize the conformation of rRNAs. The H/ACA snoRNP complex also mediates pseudouridylation of other types of RNAs. The H/ACA snoRNP complex mediates pseudouridylation at position 93 in U2 snRNA. Essential for growth. Directly binds H/ACA snoRNAs. The protein is H/ACA ribonucleoprotein complex subunit NHP2 (NHP2) of Saccharomyces cerevisiae (strain ATCC 204508 / S288c) (Baker's yeast).